Consider the following 410-residue polypeptide: DNA replication and repair protein RecF (410 aa).

Position 30 to 37 (30 to 37 (GPNGHGKT)) interacts with ATP.

Belongs to the RecF family.

It localises to the cytoplasm. The RecF protein is involved in DNA metabolism; it is required for DNA replication and normal SOS inducibility. RecF binds preferentially to single-stranded, linear DNA. It also seems to bind ATP. The protein is DNA replication and repair protein RecF of Rhodococcus opacus (strain B4).